The chain runs to 372 residues: Ketol-acid reductoisomerase (NADP(+)) (372 aa).

Residues 1 to 25 form a disordered region; sequence MTETKTQTETETDEEEGTDTDTALD. The segment covering 10 to 19 has biased composition (acidic residues); that stretch reads TETDEEEGTD. The region spanning 24 to 205 is the KARI N-terminal Rossmann domain; sequence LDTTIYYDDD…GCTRAGAIET (182 aa). NADP(+) contacts are provided by residues 49–52, Ser-75, Ser-77, and 107–110; these read YGSQ and DTVQ. His-131 is a catalytic residue. Gly-157 lines the NADP(+) pocket. A KARI C-terminal knotted domain is found at 206–351; the sequence is TFREETETDL…EPLRDLFAWS (146 aa). Mg(2+) is bound by residues Asp-214, Glu-218, Glu-250, and Glu-254. Position 275 (Ser-275) interacts with substrate. Residues 351–372 form a disordered region; sequence SDNEETNDESDVVSEPEAAADD. Residues 352-372 show a composition bias toward acidic residues; that stretch reads DNEETNDESDVVSEPEAAADD.

The protein belongs to the ketol-acid reductoisomerase family. Mg(2+) is required as a cofactor.

The enzyme catalyses (2R)-2,3-dihydroxy-3-methylbutanoate + NADP(+) = (2S)-2-acetolactate + NADPH + H(+). It catalyses the reaction (2R,3R)-2,3-dihydroxy-3-methylpentanoate + NADP(+) = (S)-2-ethyl-2-hydroxy-3-oxobutanoate + NADPH + H(+). The protein operates within amino-acid biosynthesis; L-isoleucine biosynthesis; L-isoleucine from 2-oxobutanoate: step 2/4. Its pathway is amino-acid biosynthesis; L-valine biosynthesis; L-valine from pyruvate: step 2/4. Functionally, involved in the biosynthesis of branched-chain amino acids (BCAA). Catalyzes an alkyl-migration followed by a ketol-acid reduction of (S)-2-acetolactate (S2AL) to yield (R)-2,3-dihydroxy-isovalerate. In the isomerase reaction, S2AL is rearranged via a Mg-dependent methyl migration to produce 3-hydroxy-3-methyl-2-ketobutyrate (HMKB). In the reductase reaction, this 2-ketoacid undergoes a metal-dependent reduction by NADPH to yield (R)-2,3-dihydroxy-isovalerate. The protein is Ketol-acid reductoisomerase (NADP(+)) of Haloquadratum walsbyi (strain DSM 16790 / HBSQ001).